The sequence spans 545 residues: ATP synthase subunit alpha, mitochondrial (545 aa).

A mitochondrion-targeting transit peptide spans Met-1–Leu-35. Phosphoserine is present on residues Ser-57 and Ser-178. Gly-206–Thr-213 contacts ATP.

Belongs to the ATPase alpha/beta chains family. F-type ATPases have 2 components, CF(1) - the catalytic core - and CF(0) - the membrane proton channel. CF(1) has five subunits: alpha(3), beta(3), gamma(1), delta(1), epsilon(1). CF(0) has three main subunits: a, b and c.

The protein resides in the mitochondrion inner membrane. Mitochondrial membrane ATP synthase (F(1)F(0) ATP synthase or Complex V) produces ATP from ADP in the presence of a proton gradient across the membrane which is generated by electron transport complexes of the respiratory chain. F-type ATPases consist of two structural domains, F(1) - containing the extramembraneous catalytic core, and F(0) - containing the membrane proton channel, linked together by a central stalk and a peripheral stalk. During catalysis, ATP synthesis in the catalytic domain of F(1) is coupled via a rotary mechanism of the central stalk subunits to proton translocation. Subunits alpha and beta form the catalytic core in F(1). Rotation of the central stalk against the surrounding alpha(3)beta(3) subunits leads to hydrolysis of ATP in three separate catalytic sites on the beta subunits. Subunit alpha does not bear the catalytic high-affinity ATP-binding sites. This is ATP synthase subunit alpha, mitochondrial (ATP1) from Saccharomyces cerevisiae (strain ATCC 204508 / S288c) (Baker's yeast).